Reading from the N-terminus, the 92-residue chain is MTKNYAYPLDLSWSTEEITSVLSFLNLVEKAYENRVEAALLLKSYQNYKTIVSSKLQEKQIDRNFERVSGYSTYRAVQAAKAKEKGFISLEN.

The protein belongs to the UPF0223 family.

This chain is UPF0223 protein SMU_1141c, found in Streptococcus mutans serotype c (strain ATCC 700610 / UA159).